We begin with the raw amino-acid sequence, 336 residues long: Aspartate--ammonia ligase (336 aa).

Belongs to the class-II aminoacyl-tRNA synthetase family. AsnA subfamily.

It localises to the cytoplasm. It catalyses the reaction L-aspartate + NH4(+) + ATP = L-asparagine + AMP + diphosphate + H(+). The protein operates within amino-acid biosynthesis; L-asparagine biosynthesis; L-asparagine from L-aspartate (ammonia route): step 1/1. This is Aspartate--ammonia ligase from Clostridium perfringens (strain ATCC 13124 / DSM 756 / JCM 1290 / NCIMB 6125 / NCTC 8237 / Type A).